Consider the following 912-residue polypeptide: Protein translocase subunit SecA (912 aa).

Residues glutamine 87, 105 to 109 (GEGKT), and aspartate 508 each bind ATP. Residues 869 to 912 (EQMQGGNAPVPVSQVTRDEPKVGRNDPCPCGSGKKYKHCHGQLS) are disordered. Cysteine 896, cysteine 898, cysteine 907, and histidine 908 together coordinate Zn(2+). Residues 902 to 912 (KKYKHCHGQLS) are compositionally biased toward basic residues.

The protein belongs to the SecA family. As to quaternary structure, monomer and homodimer. Part of the essential Sec protein translocation apparatus which comprises SecA, SecYEG and auxiliary proteins SecDF-YajC and YidC. It depends on Zn(2+) as a cofactor.

Its subcellular location is the cell inner membrane. The protein resides in the cytoplasm. The enzyme catalyses ATP + H2O + cellular proteinSide 1 = ADP + phosphate + cellular proteinSide 2.. Its function is as follows. Part of the Sec protein translocase complex. Interacts with the SecYEG preprotein conducting channel. Has a central role in coupling the hydrolysis of ATP to the transfer of proteins into and across the cell membrane, serving both as a receptor for the preprotein-SecB complex and as an ATP-driven molecular motor driving the stepwise translocation of polypeptide chains across the membrane. This chain is Protein translocase subunit SecA, found in Xanthomonas axonopodis pv. citri (strain 306).